A 118-amino-acid polypeptide reads, in one-letter code: V-type proton ATPase subunit G 1 (118 aa).

N-acetylalanine is present on A2.

It belongs to the V-ATPase G subunit family. V-ATPase is a heteromultimeric enzyme made up of two complexes: the ATP-hydrolytic V1 complex and the proton translocation V0 complex. The V1 complex consists of three catalytic AB heterodimers that form a heterohexamer, three peripheral stalks each consisting of EG heterodimers, one central rotor including subunits D and F, and the regulatory subunits C and H. The proton translocation complex V0 consists of the proton transport subunit a, a ring of proteolipid subunits c9c'', rotary subunit d, subunits e and f, and the accessory subunits ATP6AP1/Ac45 and ATP6AP2/PRR. In terms of tissue distribution, kidney; localizes to early distal nephron, encompassing thick ascending limbs and distal convoluted tubules (at protein level). Ubiquitous.

The protein resides in the apical cell membrane. In terms of biological role, subunit of the V1 complex of vacuolar(H+)-ATPase (V-ATPase), a multisubunit enzyme composed of a peripheral complex (V1) that hydrolyzes ATP and a membrane integral complex (V0) that translocates protons. V-ATPase is responsible for acidifying and maintaining the pH of intracellular compartments and in some cell types, is targeted to the plasma membrane, where it is responsible for acidifying the extracellular environment. In aerobic conditions, involved in intracellular iron homeostasis, thus triggering the activity of Fe(2+) prolyl hydroxylase (PHD) enzymes, and leading to HIF1A hydroxylation and subsequent proteasomal degradation. The protein is V-type proton ATPase subunit G 1 (Atp6v1g1) of Mus musculus (Mouse).